The primary structure comprises 867 residues: Prominin-1 (867 aa).

Positions M1–S19 are cleaved as a signal peptide. Residues E20–E107 lie on the Extracellular side of the membrane. Residues I108–G128 form a helical membrane-spanning segment. Over C129 to C158 the chain is Cytoplasmic. A helical transmembrane segment spans residues L159–V179. The Extracellular segment spans residues A180–Y434. K226, K258, and K265 each carry N6-acetyllysine. Residues N273, N291, N332, N374, and N415 are each glycosylated (N-linked (GlcNAc...) asparagine). The helical transmembrane segment at W435–L455 threads the bilayer. Residues G456–G487 are Cytoplasmic-facing. Residues V488–V508 traverse the membrane as a helical segment. The Extracellular portion of the chain corresponds to G509 to N794. N-linked (GlcNAc...) asparagine glycosylation is found at N554, N581, and N732. A helical transmembrane segment spans residues L795 to I815. Residues K816–Y867 are Cytoplasmic-facing. S865 carries the phosphoserine modification.

The protein belongs to the prominin family. Interacts with CDHR1 and with actin filaments. Interacts with NAT8 and NAT8B. In terms of processing, acetylation at Lys-226, Lys-258 and Lys-265 by NAT8 and NAT8B may control PROM1 protein expression and its function in cell apoptosis. In the submandibular gland, expressed on the apical side of epithelial cells. In the parotid gland, expressed in the intercalated ducts. In the sublingual gland, expressed in intercalated ducts. In the extraorbital lacrimal gland, expressed in the intercalated tubules and larger intralobular ducts. Expressed in the retina. Present in urine within small membrane particles (at protein level). In the embryo, expressed on the apical side of neuroepithelial cells and of other epithelia such as lung buds, gut and ureter buds. In the adult, expressed at the apical side of the kidney tubules and of the ependymal layer of the brain. Not expressed in gut, liver, lung, pituitary, adrenal, heart or spleen. Localized to the nascent disk membranes at the base of the rod outer segment in the retina (at protein level).

Its subcellular location is the apical cell membrane. It is found in the cell projection. The protein resides in the microvillus membrane. It localises to the cilium. The protein localises to the photoreceptor outer segment. Its subcellular location is the endoplasmic reticulum. It is found in the endoplasmic reticulum-Golgi intermediate compartment. May play a role in cell differentiation, proliferation and apoptosis. Binds cholesterol in cholesterol-containing plasma membrane microdomains and may play a role in the organization of the apical plasma membrane in epithelial cells. During early retinal development acts as a key regulator of disk morphogenesis. Involved in regulation of MAPK and Akt signaling pathways. In neuroblastoma cells suppresses cell differentiation such as neurite outgrowth in a RET-dependent manner. In Mus musculus (Mouse), this protein is Prominin-1 (Prom1).